The sequence spans 710 residues: Pentatricopeptide repeat-containing protein At1g02060, chloroplastic (710 aa).

A chloroplast-targeting transit peptide spans 1 to 21; it reads MVSSVPKLHALFVSKSQPVLR. PPR repeat units follow at residues 137–171, 172–202, 208–242, 243–277, 280–314, 315–351, 352–386, 387–421, 429–459, 463–497, 498–532, and 533–567; these read QDRY…GISP, SVLT…MRRT, DSYT…HCNP, DVVT…ATDV, NVVS…GLKP, NAVT…TFAP, DACT…KLHP, DSAS…EVLL, LAAA…LMKR, DPPS…EFVP, DLET…SYLP, and VATT…RIRQ.

It belongs to the PPR family. P subfamily.

It is found in the plastid. The protein localises to the chloroplast. This Arabidopsis thaliana (Mouse-ear cress) protein is Pentatricopeptide repeat-containing protein At1g02060, chloroplastic.